A 468-amino-acid polypeptide reads, in one-letter code: Probable Xaa-Pro aminopeptidase pepP (468 aa).

Mn(2+) contacts are provided by Asp-265, Asp-276, Glu-399, and Glu-439.

The protein belongs to the peptidase M24B family. It depends on Mn(2+) as a cofactor.

The catalysed reaction is Release of any N-terminal amino acid, including proline, that is linked to proline, even from a dipeptide or tripeptide.. In terms of biological role, catalyzes the removal of a penultimate prolyl residue from the N-termini of peptides. This Aspergillus fumigatus (strain CBS 144.89 / FGSC A1163 / CEA10) (Neosartorya fumigata) protein is Probable Xaa-Pro aminopeptidase pepP (pepP).